We begin with the raw amino-acid sequence, 270 residues long: Formamidopyrimidine-DNA glycosylase (270 aa).

Pro-2 acts as the Schiff-base intermediate with DNA in catalysis. Glu-3 functions as the Proton donor in the catalytic mechanism. Lys-58 acts as the Proton donor; for beta-elimination activity in catalysis. Residues His-91, Arg-110, and Arg-151 each coordinate DNA. Residues 236-270 (FVYGRGGQPCKVCGTALREVKLGQRASVYCPRCQR) form an FPG-type zinc finger. Arg-260 (proton donor; for delta-elimination activity) is an active-site residue.

It belongs to the FPG family. As to quaternary structure, monomer. Requires Zn(2+) as cofactor.

It catalyses the reaction Hydrolysis of DNA containing ring-opened 7-methylguanine residues, releasing 2,6-diamino-4-hydroxy-5-(N-methyl)formamidopyrimidine.. It carries out the reaction 2'-deoxyribonucleotide-(2'-deoxyribose 5'-phosphate)-2'-deoxyribonucleotide-DNA = a 3'-end 2'-deoxyribonucleotide-(2,3-dehydro-2,3-deoxyribose 5'-phosphate)-DNA + a 5'-end 5'-phospho-2'-deoxyribonucleoside-DNA + H(+). Involved in base excision repair of DNA damaged by oxidation or by mutagenic agents. Acts as a DNA glycosylase that recognizes and removes damaged bases. Has a preference for oxidized purines, such as 7,8-dihydro-8-oxoguanine (8-oxoG). Has AP (apurinic/apyrimidinic) lyase activity and introduces nicks in the DNA strand. Cleaves the DNA backbone by beta-delta elimination to generate a single-strand break at the site of the removed base with both 3'- and 5'-phosphates. This Pseudomonas putida (strain GB-1) protein is Formamidopyrimidine-DNA glycosylase.